A 254-amino-acid polypeptide reads, in one-letter code: Adenosylcobinamide-GDP ribazoletransferase (254 aa).

7 consecutive transmembrane segments (helical) span residues 29 to 49 (LFWF…LGYF), 50 to 70 (TSLL…GIAL), 98 to 118 (IMKD…MMLL), 121 to 141 (IAIL…GVLL), 170 to 190 (AGVV…FPLL), 198 to 218 (LYAV…TGLL), and 230 to 250 (VLGA…ALSA).

The protein belongs to the CobS family. Requires Mg(2+) as cofactor.

It is found in the cell inner membrane. It carries out the reaction alpha-ribazole + adenosylcob(III)inamide-GDP = adenosylcob(III)alamin + GMP + H(+). It catalyses the reaction alpha-ribazole 5'-phosphate + adenosylcob(III)inamide-GDP = adenosylcob(III)alamin 5'-phosphate + GMP + H(+). It participates in cofactor biosynthesis; adenosylcobalamin biosynthesis; adenosylcobalamin from cob(II)yrinate a,c-diamide: step 7/7. Joins adenosylcobinamide-GDP and alpha-ribazole to generate adenosylcobalamin (Ado-cobalamin). Also synthesizes adenosylcobalamin 5'-phosphate from adenosylcobinamide-GDP and alpha-ribazole 5'-phosphate. This is Adenosylcobinamide-GDP ribazoletransferase from Pelodictyon phaeoclathratiforme (strain DSM 5477 / BU-1).